A 296-amino-acid polypeptide reads, in one-letter code: MLTFQQIILKLQDYWDQQGCALLQPIDLEVGAGTSHTATFLRAIGPEPWKAAYVQPSRRPKDGRYGENPNRLQHYYQYQVVLKPAPENILDLYLGSLAALGLDLKENDVRFVEDGWENPTLGAWGLGWEVWLNGMEVTQFTYFQQVGGLDCKPVLGEITYGIERLAMYIQNCSNVYDLVWADGISYGDVYHQNEVEQSCYNFEHSNTDLLFANFTNYESEAKRLMEVPLALPAYEMVLKAAYTFNLLDARGAISVTERAAYIGRIRNLSRAVAQAYFESREKLGFPMCQRPARAKA.

It belongs to the class-II aminoacyl-tRNA synthetase family. In terms of assembly, tetramer of two alpha and two beta subunits.

Its subcellular location is the cytoplasm. The enzyme catalyses tRNA(Gly) + glycine + ATP = glycyl-tRNA(Gly) + AMP + diphosphate. This is Glycine--tRNA ligase alpha subunit from Polynucleobacter necessarius subsp. necessarius (strain STIR1).